Reading from the N-terminus, the 392-residue chain is NADH-quinone oxidoreductase subunit D (392 aa).

This sequence belongs to the complex I 49 kDa subunit family. In terms of assembly, NDH-1 is composed of 14 different subunits. Subunits NuoB, C, D, E, F, and G constitute the peripheral sector of the complex.

It is found in the cell inner membrane. The enzyme catalyses a quinone + NADH + 5 H(+)(in) = a quinol + NAD(+) + 4 H(+)(out). In terms of biological role, NDH-1 shuttles electrons from NADH, via FMN and iron-sulfur (Fe-S) centers, to quinones in the respiratory chain. The immediate electron acceptor for the enzyme in this species is believed to be ubiquinone. Couples the redox reaction to proton translocation (for every two electrons transferred, four hydrogen ions are translocated across the cytoplasmic membrane), and thus conserves the redox energy in a proton gradient. This chain is NADH-quinone oxidoreductase subunit D, found in Parvibaculum lavamentivorans (strain DS-1 / DSM 13023 / NCIMB 13966).